Reading from the N-terminus, the 130-residue chain is MGIVGVGIDLVSIPEFAEQVDQPGTVFSETFTPGERRDASDKSSSAARHLAARWAAKEAVIKAWSGSRFAQRPVLREDIHRDIEVVTDMWGRPRVRLSGDIAKHLADVTIHVSLTHEKDTAAAVAILETP.

The Mg(2+) site is built by Asp-9 and Glu-58.

It belongs to the P-Pant transferase superfamily. AcpS family. The cofactor is Mg(2+).

It localises to the cytoplasm. The enzyme catalyses apo-[ACP] + CoA = holo-[ACP] + adenosine 3',5'-bisphosphate + H(+). Transfers the 4'-phosphopantetheine moiety from coenzyme A to a Ser of acyl-carrier-protein. This chain is Holo-[acyl-carrier-protein] synthase, found in Mycolicibacterium paratuberculosis (strain ATCC BAA-968 / K-10) (Mycobacterium paratuberculosis).